The sequence spans 310 residues: Olfactory receptor 2A12 (310 aa).

The Extracellular portion of the chain corresponds to Met1–Leu24. A glycan (N-linked (GlcNAc...) asparagine) is linked at Asn4. The chain crosses the membrane as a helical span at residues Phe25–Ile48. The Cytoplasmic segment spans residues Tyr49–Thr56. A helical transmembrane segment spans residues Pro57–Pro78. The Extracellular segment spans residues Lys79–Gln99. Cys96 and Cys188 are oxidised to a cystine. The helical transmembrane segment at Thr100–Tyr119 threads the bilayer. The Cytoplasmic segment spans residues Asp120–Arg138. A helical transmembrane segment spans residues Val139–Val157. At His158–Asn194 the chain is on the extracellular side. Residues Gln195–Leu218 form a helical membrane-spanning segment. Residues His219 to Lys235 lie on the Cytoplasmic side of the membrane. Residues Ala236–Tyr258 form a helical membrane-spanning segment. The Extracellular segment spans residues Met259–Lys271. The helical transmembrane segment at Ile272–Leu291 threads the bilayer. Topologically, residues Arg292 to Met310 are cytoplasmic.

The protein belongs to the G-protein coupled receptor 1 family.

Its subcellular location is the cell membrane. In terms of biological role, odorant receptor. The sequence is that of Olfactory receptor 2A12 (OR2A12) from Homo sapiens (Human).